A 718-amino-acid polypeptide reads, in one-letter code: Phenylalanine--tRNA ligase beta subunit (718 aa).

The tRNA-binding domain maps to leucine 39–lysine 153. The region spanning serine 386–aspartate 460 is the B5 domain. Residues aspartate 438, aspartate 444, and aspartate 448 each coordinate Mg(2+).

This sequence belongs to the phenylalanyl-tRNA synthetase beta subunit family. Type 1 subfamily. In terms of assembly, tetramer of two alpha and two beta subunits. Mg(2+) serves as cofactor.

Its subcellular location is the cytoplasm. It carries out the reaction tRNA(Phe) + L-phenylalanine + ATP = L-phenylalanyl-tRNA(Phe) + AMP + diphosphate + H(+). This Mesomycoplasma hyopneumoniae (strain J / ATCC 25934 / NCTC 10110) (Mycoplasma hyopneumoniae) protein is Phenylalanine--tRNA ligase beta subunit.